Here is a 173-residue protein sequence, read N- to C-terminus: Putative metal-dependent hydrolase BC_2708 (173 aa).

The Zn(2+) site is built by His-65, His-156, and His-160.

It belongs to the metal hydrolase YfiT family. Homodimer. The cofactor is Zn(2+).

The protein localises to the cytoplasm. Possible metal-dependent hydrolase. The polypeptide is Putative metal-dependent hydrolase BC_2708 (Bacillus cereus (strain ATCC 14579 / DSM 31 / CCUG 7414 / JCM 2152 / NBRC 15305 / NCIMB 9373 / NCTC 2599 / NRRL B-3711)).